We begin with the raw amino-acid sequence, 88 residues long: LYR motif-containing protein 2 (88 aa).

The N-terminal 19 residues, 1–19 (MAASRLPPATLTLKQFVRR), are a transit peptide targeting the mitochondrion.

This sequence belongs to the complex I LYR family.

The protein resides in the mitochondrion. Involved in efficient integration of the N-module into mitochondrial respiratory chain complex I. The protein is LYR motif-containing protein 2 (LYRM2) of Pongo abelii (Sumatran orangutan).